The following is a 502-amino-acid chain: 4,4'-diaponeurosporene oxygenase (502 aa).

Residue 8–20 (IIGGGLGGISAAI) participates in FAD binding.

Belongs to the carotenoid/retinoid oxidoreductase family. CrtP subfamily. It depends on FAD as a cofactor.

It carries out the reaction all-trans-4,4'-diaponeurosporene + 2 AH2 + 2 O2 = 4,4'-diaponeurosporenal + 2 A + 3 H2O. It participates in carotenoid biosynthesis; staphyloxanthin biosynthesis; staphyloxanthin from farnesyl diphosphate: step 3/5. Its function is as follows. Involved in the biosynthesis of the yellow-orange carotenoid staphyloxanthin, which plays a role in the virulence via its protective function against oxidative stress. Catalyzes the oxidation of the terminal methyl side group of 4,4'-diaponeurosporene to form 4,4'-diaponeurosporen-4-al. The protein is 4,4'-diaponeurosporene oxygenase of Staphylococcus haemolyticus (strain JCSC1435).